A 557-amino-acid polypeptide reads, in one-letter code: Probable asparagine synthetase [glutamine-hydrolyzing] (557 aa).

Catalysis depends on cysteine 2, which acts as the For GATase activity. Positions 2 to 188 (CGILAVHHVA…PGHYYDSETK (187 aa)) constitute a Glutamine amidotransferase type-2 domain. Residues 50–54 (RLAIV), 75–77 (NGE), and aspartate 99 each bind L-glutamine. The Asparagine synthetase domain occupies 196 to 531 (PSWWDENKIP…PRQCADTVMR (336 aa)). ATP contacts are provided by residues leucine 235, isoleucine 280, and 354–355 (SG). A phosphoserine mark is found at serine 391 and serine 489.

The protein resides in the cytoplasm. Its subcellular location is the nucleus. The enzyme catalyses L-aspartate + L-glutamine + ATP + H2O = L-asparagine + L-glutamate + AMP + diphosphate + H(+). The protein operates within amino-acid biosynthesis; L-asparagine biosynthesis; L-asparagine from L-aspartate (L-Gln route): step 1/1. The protein is Probable asparagine synthetase [glutamine-hydrolyzing] (asn1) of Schizosaccharomyces pombe (strain 972 / ATCC 24843) (Fission yeast).